The primary structure comprises 121 residues: Large ribosomal subunit protein uL22 (121 aa).

Belongs to the universal ribosomal protein uL22 family. In terms of assembly, part of the 50S ribosomal subunit.

In terms of biological role, this protein binds specifically to 23S rRNA; its binding is stimulated by other ribosomal proteins, e.g. L4, L17, and L20. It is important during the early stages of 50S assembly. It makes multiple contacts with different domains of the 23S rRNA in the assembled 50S subunit and ribosome. Functionally, the globular domain of the protein is located near the polypeptide exit tunnel on the outside of the subunit, while an extended beta-hairpin is found that lines the wall of the exit tunnel in the center of the 70S ribosome. The polypeptide is Large ribosomal subunit protein uL22 (Micrococcus luteus (strain ATCC 4698 / DSM 20030 / JCM 1464 / CCM 169 / CCUG 5858 / IAM 1056 / NBRC 3333 / NCIMB 9278 / NCTC 2665 / VKM Ac-2230) (Micrococcus lysodeikticus)).